Reading from the N-terminus, the 582-residue chain is Leucine-rich repeat transmembrane neuronal protein 3 (582 aa).

The first 30 residues, 1–30 (MGFNVIRLLRGSAVAVVLAPTVLLTMLSSA), serve as a signal peptide directing secretion. The 31-residue stretch at 31-61 (ERGCPKGCRCEGKMVYCESQKLQEIPSSISA) folds into the LRRNT domain. Residues 31 to 420 (ERGCPKGCRC…VDTEHISFHK (390 aa)) are Extracellular-facing. 10 LRR repeats span residues 63–83 (CLGL…QFKG), 86–107 (QLTW…AFNG), 110–131 (RLKE…TFRP), 134–155 (NLRN…QFRG), 158–179 (KLLS…IFQD), 182–203 (NLEL…VFAG), 206–226 (RLKE…ALFP), 230–251 (SLQN…MSWT), 254–275 (SLQR…SVFQ), and 279–300 (NLQR…ILDS). Asn126 is a glycosylation site (N-linked (GlcNAc...) asparagine). Residues 312-363 (NIWECSRNICSLVNWLRSFKGLRENTIICASPKELQGVNVIDAVKNYSICGK) form the LRRCT domain. A glycan (N-linked (GlcNAc...) asparagine) is linked at Asn357. The disordered stretch occupies residues 378–410 (KPTFKPKLPRPKHESKPPLPPTVGATEPSPETD). A helical membrane pass occupies residues 421-441 (IIAGSVALFLSVLVILLVMYV). At 442–582 (SWKRYPASMK…RISDHKPQLA (141 aa)) the chain is on the cytoplasmic side.

This sequence belongs to the LRRTM family. As to expression, expressed in neuronal tissues.

It is found in the cell membrane. The protein localises to the postsynaptic cell membrane. Its function is as follows. May play a role in the development and maintenance of the vertebrate nervous system. Exhibits a limited synaptogenic activity in vitro, restricted to excitatory presynaptic differentiation. The protein is Leucine-rich repeat transmembrane neuronal protein 3 (Lrrtm3) of Mus musculus (Mouse).